Reading from the N-terminus, the 264-residue chain is Acyl-[acyl-carrier-protein]--UDP-N-acetylglucosamine O-acyltransferase (264 aa).

It belongs to the transferase hexapeptide repeat family. LpxA subfamily. As to quaternary structure, homotrimer.

Its subcellular location is the cytoplasm. The catalysed reaction is a (3R)-hydroxyacyl-[ACP] + UDP-N-acetyl-alpha-D-glucosamine = a UDP-3-O-[(3R)-3-hydroxyacyl]-N-acetyl-alpha-D-glucosamine + holo-[ACP]. It participates in glycolipid biosynthesis; lipid IV(A) biosynthesis; lipid IV(A) from (3R)-3-hydroxytetradecanoyl-[acyl-carrier-protein] and UDP-N-acetyl-alpha-D-glucosamine: step 1/6. In terms of biological role, involved in the biosynthesis of lipid A, a phosphorylated glycolipid that anchors the lipopolysaccharide to the outer membrane of the cell. This is Acyl-[acyl-carrier-protein]--UDP-N-acetylglucosamine O-acyltransferase from Rickettsia typhi (strain ATCC VR-144 / Wilmington).